We begin with the raw amino-acid sequence, 177 residues long: Acireductone dioxygenase (177 aa).

Fe(2+) is bound by residues histidine 97, histidine 99, glutamate 103, and histidine 141. 4 residues coordinate Ni(2+): histidine 97, histidine 99, glutamate 103, and histidine 141.

It belongs to the acireductone dioxygenase (ARD) family. In terms of assembly, monomer. The cofactor is Fe(2+). Requires Ni(2+) as cofactor.

It carries out the reaction 1,2-dihydroxy-5-(methylsulfanyl)pent-1-en-3-one + O2 = 3-(methylsulfanyl)propanoate + CO + formate + 2 H(+). The enzyme catalyses 1,2-dihydroxy-5-(methylsulfanyl)pent-1-en-3-one + O2 = 4-methylsulfanyl-2-oxobutanoate + formate + 2 H(+). It participates in amino-acid biosynthesis; L-methionine biosynthesis via salvage pathway; L-methionine from S-methyl-5-thio-alpha-D-ribose 1-phosphate: step 5/6. Its function is as follows. Catalyzes 2 different reactions between oxygen and the acireductone 1,2-dihydroxy-3-keto-5-methylthiopentene (DHK-MTPene) depending upon the metal bound in the active site. Fe-containing acireductone dioxygenase (Fe-ARD) produces formate and 2-keto-4-methylthiobutyrate (KMTB), the alpha-ketoacid precursor of methionine in the methionine recycle pathway. Ni-containing acireductone dioxygenase (Ni-ARD) produces methylthiopropionate, carbon monoxide and formate, and does not lie on the methionine recycle pathway. The chain is Acireductone dioxygenase from Leptospira biflexa serovar Patoc (strain Patoc 1 / ATCC 23582 / Paris).